The primary structure comprises 140 residues: MAIERTFSMIKPDATRRNLTGAIIAKLEEAGLRVVASKRVWMSRREAEGFYAVHKDRPFFGELVEFMSSGPTVVQVLEGENAIAKNREVMGATNPANADEGTIRKAFALSIGENSVHGSDAPETAAEEIAYWFSGTEIVG.

ATP-binding residues include lysine 11, phenylalanine 59, arginine 87, threonine 93, arginine 104, and asparagine 114. Histidine 117 (pros-phosphohistidine intermediate) is an active-site residue.

Belongs to the NDK family. As to quaternary structure, homotetramer. Mg(2+) is required as a cofactor.

It is found in the cytoplasm. The catalysed reaction is a 2'-deoxyribonucleoside 5'-diphosphate + ATP = a 2'-deoxyribonucleoside 5'-triphosphate + ADP. It carries out the reaction a ribonucleoside 5'-diphosphate + ATP = a ribonucleoside 5'-triphosphate + ADP. In terms of biological role, major role in the synthesis of nucleoside triphosphates other than ATP. The ATP gamma phosphate is transferred to the NDP beta phosphate via a ping-pong mechanism, using a phosphorylated active-site intermediate. This is Nucleoside diphosphate kinase from Brucella melitensis biotype 1 (strain ATCC 23456 / CCUG 17765 / NCTC 10094 / 16M).